Consider the following 266-residue polypeptide: MRLIPLTTAEQVGKWAARHIVNRINAFKPTADRPFVLGLPTGGTPMTTYKALVEMHKAGQVSFKHVVTFNMDEYVGLPKEHPESYYSFMHRNFFDHVDIPAENINLLNGNAPDIDAECRQYEEKIRSYGKIHLFMGGVGNDGHIAFNEPASSLASRTRIKTLTHDTRVANSRFFDNDVNQVPKYALTVGVGTLLDAEEVMIMVLGSQKALALQAAVEGCVNHMWTISCLQLHPKAIMVCDEPSTMELKVKTLRYFNELEAENIKGL.

Asp72 serves as the catalytic Proton acceptor; for enolization step. The active-site For ring-opening step is Asp141. Residue His143 is the Proton acceptor; for ring-opening step of the active site. Glu148 functions as the For ring-opening step in the catalytic mechanism.

This sequence belongs to the glucosamine/galactosamine-6-phosphate isomerase family. NagB subfamily. As to quaternary structure, homohexamer; trimer of disulfide-linked dimers.

The enzyme catalyses alpha-D-glucosamine 6-phosphate + H2O = beta-D-fructose 6-phosphate + NH4(+). The protein operates within amino-sugar metabolism; N-acetylneuraminate degradation; D-fructose 6-phosphate from N-acetylneuraminate: step 5/5. Allosterically activated by N-acetylglucosamine 6-phosphate (GlcNAc6P). In terms of biological role, catalyzes the reversible isomerization-deamination of glucosamine 6-phosphate (GlcN6P) to form fructose 6-phosphate (Fru6P) and ammonium ion. The sequence is that of Glucosamine-6-phosphate deaminase from Shigella flexneri serotype 5b (strain 8401).